Here is a 220-residue protein sequence, read N- to C-terminus: uncharacterized protein (220 aa).

The tract at residues 196–220 is disordered; sequence KDDNSKDDNNDSEDLSKQIDNLKLD.

This is an uncharacterized protein from Invertebrate iridescent virus 6 (IIV-6).